The sequence spans 474 residues: Glutamate--tRNA ligase (474 aa).

The 'HIGH' region motif lies at 9 to 19 (PSPTGYLHVGG). The short motif at 240–244 (KLSKR) is the 'KMSKS' region element. Position 243 (lysine 243) interacts with ATP.

Belongs to the class-I aminoacyl-tRNA synthetase family. Glutamate--tRNA ligase type 1 subfamily. In terms of assembly, monomer.

The protein localises to the cytoplasm. The enzyme catalyses tRNA(Glu) + L-glutamate + ATP = L-glutamyl-tRNA(Glu) + AMP + diphosphate. Catalyzes the attachment of glutamate to tRNA(Glu) in a two-step reaction: glutamate is first activated by ATP to form Glu-AMP and then transferred to the acceptor end of tRNA(Glu). In Aliivibrio fischeri (strain ATCC 700601 / ES114) (Vibrio fischeri), this protein is Glutamate--tRNA ligase.